The following is an 80-amino-acid chain: Small ribosomal subunit protein bS16 (80 aa).

The protein belongs to the bacterial ribosomal protein bS16 family.

The sequence is that of Small ribosomal subunit protein bS16 from Acholeplasma laidlawii (strain PG-8A).